The chain runs to 579 residues: Rop guanine nucleotide exchange factor 6 (579 aa).

Over residues 31–61 (ESTTDSSLSSSSSGVGSSSGRSSVAERSVSS) the composition is skewed to low complexity. The disordered stretch occupies residues 31 to 89 (ESTTDSSLSSSSSGVGSSSGRSSVAERSVSSPPTKSQILGWPLGQGSWRKSSGKMKKKT). One can recognise a PRONE domain in the interval 98–479 (FKRVGTETSE…DISKDDGDGD (382 aa)).

Functionally, guanine-nucleotide exchange factor (GEF) that acts as an activator of Rop (Rho of plants) GTPases by promoting the exchange of GDP for GTP. The polypeptide is Rop guanine nucleotide exchange factor 6 (ROPGEF6) (Arabidopsis thaliana (Mouse-ear cress)).